The chain runs to 344 residues: Hyoscyamine 6-dioxygenase (344 aa).

Residues 193–293 form the Fe2OG dioxygenase domain; it reads QIQMMLTNYY…RVSIATLIGP (101 aa). Fe cation contacts are provided by His-217, Asp-219, and His-274. Arg-284 lines the 2-oxoglutarate pocket.

It belongs to the iron/ascorbate-dependent oxidoreductase family. In terms of assembly, monomer. The cofactor is Fe(2+). L-ascorbate is required as a cofactor. The N-terminus is blocked. Root.

The enzyme catalyses L-hyoscyamine + 2-oxoglutarate + O2 = (6S)-6-hydroxyhyoscyamine + succinate + CO2. Its pathway is alkaloid biosynthesis; scopolamine biosynthesis. The sequence is that of Hyoscyamine 6-dioxygenase (H6H) from Hyoscyamus niger (Black henbane).